The following is a 122-amino-acid chain: Ribonuclease P protein component (122 aa).

This sequence belongs to the RnpA family. Consists of a catalytic RNA component (M1 or rnpB) and a protein subunit.

The enzyme catalyses Endonucleolytic cleavage of RNA, removing 5'-extranucleotides from tRNA precursor.. Its function is as follows. RNaseP catalyzes the removal of the 5'-leader sequence from pre-tRNA to produce the mature 5'-terminus. It can also cleave other RNA substrates such as 4.5S RNA. The protein component plays an auxiliary but essential role in vivo by binding to the 5'-leader sequence and broadening the substrate specificity of the ribozyme. This chain is Ribonuclease P protein component, found in Synechococcus elongatus (strain ATCC 33912 / PCC 7942 / FACHB-805) (Anacystis nidulans R2).